The sequence spans 433 residues: N-lysine methyltransferase SMYD2 (433 aa).

Residues 7–241 (GGLERFCSAG…PGDEVFTSYI (235 aa)) form the SET domain. 17–19 (KGR) provides a ligand contact to S-adenosyl-L-methionine. Zn(2+) is bound by residues cysteine 52, cysteine 55, cysteine 65, cysteine 68, cysteine 74, cysteine 78, histidine 86, and cysteine 90. An MYND-type zinc finger spans residues 52–90 (CECCFARKEGLSKCGRCKQAFYCDVECQKEDWPLHKLEC). S-adenosyl-L-methionine contacts are provided by residues histidine 137, 206–207 (NH), and 258–260 (YFF). At serine 283 the chain carries Phosphoserine.

The protein belongs to the class V-like SAM-binding methyltransferase superfamily. Interacts with RNA polymerase II and HELZ. Interacts with SIN3A and HDAC1. Interacts (via MYND-type zinc finger) with EPB41L3. Interacts (via SET domain) with p53/TP53. Interacts with RB1 and HSP90AA1.

It localises to the cytoplasm. The protein resides in the cytosol. It is found in the nucleus. The catalysed reaction is L-lysyl(4)-[histone H3] + 3 S-adenosyl-L-methionine = N(6),N(6),N(6)-trimethyl-L-lysyl(4)-[histone H3] + 3 S-adenosyl-L-homocysteine + 3 H(+). It carries out the reaction L-lysyl-[protein] + S-adenosyl-L-methionine = N(6)-methyl-L-lysyl-[protein] + S-adenosyl-L-homocysteine + H(+). In terms of biological role, protein-lysine N-methyltransferase that methylates both histones and non-histone proteins, including p53/TP53 and RB1. Specifically trimethylates histone H3 'Lys-4' (H3K4me3) in vivo. The activity requires interaction with HSP90alpha. Shows even higher methyltransferase activity on p53/TP53. Monomethylates 'Lys-370' of p53/TP53, leading to decreased DNA-binding activity and subsequent transcriptional regulation activity of p53/TP53. Monomethylates RB1 at 'Lys-860'. The chain is N-lysine methyltransferase SMYD2 (Smyd2) from Rattus norvegicus (Rat).